The chain runs to 982 residues: Probable DNA-directed RNA polymerase (982 aa).

This sequence belongs to the RNA polymerase beta chain family.

It catalyses the reaction RNA(n) + a ribonucleoside 5'-triphosphate = RNA(n+1) + diphosphate. In terms of biological role, the presence of the two linear plasmids, termed pGKL1 and pGKL2, in strains of Kluyveromyces lactis confers the killer phenotype to the host cell, by promoting the secretion of a toxin able to inhibit the growth of sensitive strains. The protein is Probable DNA-directed RNA polymerase of Kluyveromyces lactis (strain ATCC 8585 / CBS 2359 / DSM 70799 / NBRC 1267 / NRRL Y-1140 / WM37) (Yeast).